Here is a 684-residue protein sequence, read N- to C-terminus: Actin-related protein 5 (684 aa).

Residues 262 to 469 (KEKSVIIQLP…ARQKQKQKAN (208 aa)) adopt a coiled-coil conformation. 2 disordered regions span residues 392-443 (KEKK…PEHY) and 481-500 (VNPT…EDPE). Positions 402–443 (SMKDGRLAQKRKRDEEKEKEKEKEEERDRQEEESFLKDPEHY) are enriched in basic and acidic residues.

It belongs to the actin family. ARP5 subfamily. Component of the chromatin-remodeling Ino80 complex.

It localises to the nucleus. In terms of biological role, proposed core component of the chromatin remodeling Ino80 complex which is involved in transcriptional regulation, DNA replication and probably DNA repair. The polypeptide is Actin-related protein 5 (arpE) (Dictyostelium discoideum (Social amoeba)).